The following is a 215-amino-acid chain: Cytochrome b6 (215 aa).

Residues 32-52 (IFYCLGGITLTCFLVQVATGF) form a helical membrane-spanning segment. Cys-35 serves as a coordination point for heme c. The heme b site is built by His-86 and His-100. 3 consecutive transmembrane segments (helical) span residues 90 to 110 (ASMMVLMMILHVFRVYLTGGF), 116 to 136 (LTWVTGVVLAVLTASFGVTGY), and 186 to 206 (LHTFVLPLLTAVFMLMHFLMI). The heme b site is built by His-187 and His-202.

It belongs to the cytochrome b family. PetB subfamily. As to quaternary structure, the 4 large subunits of the cytochrome b6-f complex are cytochrome b6, subunit IV (17 kDa polypeptide, PetD), cytochrome f and the Rieske protein, while the 4 small subunits are PetG, PetL, PetM and PetN. The complex functions as a dimer. Heme b is required as a cofactor. Heme c serves as cofactor.

Its subcellular location is the plastid. The protein localises to the chloroplast thylakoid membrane. Functionally, component of the cytochrome b6-f complex, which mediates electron transfer between photosystem II (PSII) and photosystem I (PSI), cyclic electron flow around PSI, and state transitions. The sequence is that of Cytochrome b6 from Hordeum vulgare (Barley).